Here is a 354-residue protein sequence, read N- to C-terminus: Uroporphyrinogen decarboxylase (354 aa).

Substrate-binding positions include 25–29, Asp75, Tyr152, Thr207, and His330; that span reads RQAGR.

Belongs to the uroporphyrinogen decarboxylase family. In terms of assembly, homodimer.

The protein resides in the cytoplasm. The enzyme catalyses uroporphyrinogen III + 4 H(+) = coproporphyrinogen III + 4 CO2. It participates in porphyrin-containing compound metabolism; protoporphyrin-IX biosynthesis; coproporphyrinogen-III from 5-aminolevulinate: step 4/4. Its function is as follows. Catalyzes the decarboxylation of four acetate groups of uroporphyrinogen-III to yield coproporphyrinogen-III. This chain is Uroporphyrinogen decarboxylase, found in Xanthomonas campestris pv. campestris (strain 8004).